Consider the following 901-residue polypeptide: Pantothenate kinase 2 (901 aa).

Residues 1-10 (MAGQEDEYDP) show a composition bias toward acidic residues. The tract at residues 1 to 50 (MAGQEDEYDPILDNKREAEAKSQVSVAADKNMAPSTSGTPIHRSGSRPQL) is disordered. Residues 1–466 (MAGQEDEYDP…LGDLDEKISW (466 aa)) form a pantothenate kinase region. Residues 467–901 (MEKFVRRGTE…CVCRYEPPSL (435 aa)) form a 4'-phosphopantetheine phosphatase region. Positions 731, 732, and 767 each coordinate Mn(2+). A Subfamily II EGMGR motif motif is present at residues 851–855 (EGMGR).

It in the N-terminal section; belongs to the type II pantothenate kinase family. The protein in the C-terminal section; belongs to the damage-control phosphatase family. Phosphopantetheine phosphatase II subfamily. Requires Mn(2+) as cofactor. The cofactor is Ni(2+). Highly expressed in leaves and developing seeds. Expressed in roots, stems and flowers.

The catalysed reaction is (R)-pantothenate + ATP = (R)-4'-phosphopantothenate + ADP + H(+). It catalyses the reaction (R)-4'-phosphopantothenate + H2O = (R)-pantothenate + phosphate. The enzyme catalyses (R)-4'-phosphopantetheine + H2O = (R)-pantetheine + phosphate. It carries out the reaction (R)-4'-phosphopantetheine sulfonate + H2O = (R)-pantetheine sulfonate + phosphate. The protein operates within cofactor biosynthesis; coenzyme A biosynthesis; CoA from (R)-pantothenate: step 1/5. Its activity is regulated as follows. Activity is strongly promoted by Co(2+), Ni(2+) and Mn(2+). Activity is inhibited by EDTA. Functionally, catalyzes the phosphorylation of pantothenate the first step in CoA biosynthesis. May play a role in the physiological regulation of the intracellular CoA concentration. Functionally redudant with PANK1. The phosphatase activity shows preference for normal or oxidatively damaged intermediates of 4'-phosphopantetheine, which provides strong indirect evidence that the phosphatase activity pre-empts damage in the CoA pathway. Hydrolyzing excess 4'-phosphopantetheine could constitute a directed overflow mechanism to prevent its oxidation to the S-sulfonate, sulfonate, or other forms. Hydrolyzing 4'-phosphopantetheine sulfonate or S-sulfonate would forestall their conversion to inactive forms of CoA and acyl carrier protein. The polypeptide is Pantothenate kinase 2 (PANK2) (Arabidopsis thaliana (Mouse-ear cress)).